The sequence spans 462 residues: 2-(3-amino-3-carboxypropyl)histidine synthase subunit 1 (462 aa).

Positions Met1 to Ala87 are disordered. Over residues Glu35 to Ala44 the composition is skewed to polar residues. 3 residues coordinate [4Fe-4S] cluster: Cys173, Cys276, and Cys406.

This sequence belongs to the DPH1/DPH2 family. DPH1 subfamily. As to quaternary structure, component of the 2-(3-amino-3-carboxypropyl)histidine synthase complex composed of DPH1, DPH2, DPH3 and a NADH-dependent reductase, predominantly CBR1. It depends on [4Fe-4S] cluster as a cofactor.

The protein resides in the cytoplasm. It catalyses the reaction L-histidyl-[translation elongation factor 2] + S-adenosyl-L-methionine = 2-[(3S)-amino-3-carboxypropyl]-L-histidyl-[translation elongation factor 2] + S-methyl-5'-thioadenosine + H(+). It functions in the pathway protein modification; peptidyl-diphthamide biosynthesis. Its function is as follows. Catalyzes the first step of diphthamide biosynthesis, a post-translational modification of histidine which occurs in elongation factor 2. DPH1 and DPH2 transfer a 3-amino-3-carboxypropyl (ACP) group from S-adenosyl-L-methionine (SAM) to a histidine residue, the reaction is assisted by a reduction system comprising DPH3 and a NADH-dependent reductase, predominantly CBR1. This chain is 2-(3-amino-3-carboxypropyl)histidine synthase subunit 1 (DPH1), found in Gibberella zeae (strain ATCC MYA-4620 / CBS 123657 / FGSC 9075 / NRRL 31084 / PH-1) (Wheat head blight fungus).